The chain runs to 427 residues: UPF0597 protein CPF_0803 (427 aa).

Belongs to the UPF0597 family.

This is UPF0597 protein CPF_0803 from Clostridium perfringens (strain ATCC 13124 / DSM 756 / JCM 1290 / NCIMB 6125 / NCTC 8237 / Type A).